The following is a 185-amino-acid chain: Ribosome-recycling factor (185 aa).

The protein belongs to the RRF family.

It localises to the cytoplasm. In terms of biological role, responsible for the release of ribosomes from messenger RNA at the termination of protein biosynthesis. May increase the efficiency of translation by recycling ribosomes from one round of translation to another. This chain is Ribosome-recycling factor, found in Vibrio campbellii (strain ATCC BAA-1116).